The primary structure comprises 533 residues: Tyrosine ammonia-lyase (533 aa).

Catalysis depends on Y57, which acts as the Proton donor/acceptor. H87 is a substrate binding site. The segment at residues 146–148 is a cross-link (5-imidazolinone (Ala-Gly)); the sequence is ASG. S147 bears the 2,3-didehydroalanine (Ser) mark. Substrate is bound by residues N200 and R305.

This sequence belongs to the TAL/TAM family. In terms of assembly, homotetramer; dimer of dimers. In terms of processing, contains an active site 4-methylidene-imidazol-5-one (MIO), which is formed autocatalytically by cyclization and dehydration of residues Ala-Ser-Gly.

The catalysed reaction is L-tyrosine = (E)-4-coumarate + NH4(+). The enzyme catalyses L-tyrosine = 3-amino-3-(4-hydroxyphenyl)propanoate. In terms of biological role, has ammonia-lyase and, to a lesser extent, aminomutase activity. Catalyzes the rearrangement of L-tyrosine to R-beta-tyrosine and S-beta-tyrosine. Does not accept L-histidine or L-phenylalanine as substrates. The sequence is that of Tyrosine ammonia-lyase from Cupriavidus metallidurans (strain ATCC 43123 / DSM 2839 / NBRC 102507 / CH34) (Ralstonia metallidurans).